A 112-amino-acid chain; its full sequence is ATP synthase subunit c (112 aa).

2 helical membrane-spanning segments follow: residues 36–56 and 81–101; these read FSVL…AIGM and MFIA…IALI.

It belongs to the ATPase C chain family. F-type ATPases have 2 components, F(1) - the catalytic core - and F(0) - the membrane proton channel. F(1) has five subunits: alpha(3), beta(3), gamma(1), delta(1), epsilon(1). F(0) has three main subunits: a(1), b(2) and c(10-14). The alpha and beta chains form an alternating ring which encloses part of the gamma chain. F(1) is attached to F(0) by a central stalk formed by the gamma and epsilon chains, while a peripheral stalk is formed by the delta and b chains.

It is found in the cell inner membrane. In terms of biological role, f(1)F(0) ATP synthase produces ATP from ADP in the presence of a proton or sodium gradient. F-type ATPases consist of two structural domains, F(1) containing the extramembraneous catalytic core and F(0) containing the membrane proton channel, linked together by a central stalk and a peripheral stalk. During catalysis, ATP synthesis in the catalytic domain of F(1) is coupled via a rotary mechanism of the central stalk subunits to proton translocation. Key component of the F(0) channel; it plays a direct role in translocation across the membrane. A homomeric c-ring of between 10-14 subunits forms the central stalk rotor element with the F(1) delta and epsilon subunits. This Campylobacter jejuni subsp. doylei (strain ATCC BAA-1458 / RM4099 / 269.97) protein is ATP synthase subunit c.